The chain runs to 573 residues: Splicing factor U2af large subunit B (573 aa).

Over residues 1–12 (MPDYEGNGEDID) the composition is skewed to acidic residues. The interval 1-187 (MPDYEGNGED…DMAPPTSAML (187 aa)) is disordered. Residues 38–145 (SDSKSQHSSR…QREHAKDRES (108 aa)) show a composition bias toward basic and acidic residues. Positions 161–173 (SRSRSRSRSKSKR) are enriched in basic residues. RRM domains are found at residues 239–322 (RRVY…RPSD), 359–437 (DRIF…RANQ), and 478–564 (EVIS…YPEN).

Belongs to the splicing factor SR family. As to expression, expressed in stems, leaves and apical buds.

It localises to the nucleus. Its function is as follows. Necessary for the splicing of pre-mRNA. Binds to the U -enriched regions of plant introns. The sequence is that of Splicing factor U2af large subunit B (U2AF65B) from Nicotiana plumbaginifolia (Leadwort-leaved tobacco).